The sequence spans 353 residues: S-adenosylmethionine:tRNA ribosyltransferase-isomerase (353 aa).

The protein belongs to the QueA family. In terms of assembly, monomer.

It is found in the cytoplasm. The catalysed reaction is 7-aminomethyl-7-carbaguanosine(34) in tRNA + S-adenosyl-L-methionine = epoxyqueuosine(34) in tRNA + adenine + L-methionine + 2 H(+). The protein operates within tRNA modification; tRNA-queuosine biosynthesis. In terms of biological role, transfers and isomerizes the ribose moiety from AdoMet to the 7-aminomethyl group of 7-deazaguanine (preQ1-tRNA) to give epoxyqueuosine (oQ-tRNA). The polypeptide is S-adenosylmethionine:tRNA ribosyltransferase-isomerase (Baumannia cicadellinicola subsp. Homalodisca coagulata).